A 289-amino-acid chain; its full sequence is D-alanine aminotransferase (289 aa).

Y31 is a substrate binding site. R50 contacts pyridoxal 5'-phosphate. The substrate site is built by R99 and H101. Residue K147 is modified to N6-(pyridoxal phosphate)lysine. E179 contacts pyridoxal 5'-phosphate.

The protein belongs to the class-IV pyridoxal-phosphate-dependent aminotransferase family. In terms of assembly, homodimer. The cofactor is pyridoxal 5'-phosphate.

The catalysed reaction is D-alanine + 2-oxoglutarate = D-glutamate + pyruvate. Its function is as follows. Acts on the D-isomers of alanine, leucine, aspartate, glutamate, aminobutyrate, norvaline and asparagine. The enzyme transfers an amino group from a substrate D-amino acid to the pyridoxal phosphate cofactor to form pyridoxamine and an alpha-keto acid in the first half-reaction. The second half-reaction is the reverse of the first, transferring the amino group from the pyridoxamine to a second alpha-keto acid to form the product D-amino acid via a ping-pong mechanism. This is an important process in the formation of D-alanine and D-glutamate, which are essential bacterial cell wall components. This chain is D-alanine aminotransferase (dat), found in Listeria monocytogenes serotype 1/2a (strain 10403S).